The primary structure comprises 312 residues: Pantothenate kinase (312 aa).

Residue 97–104 coordinates ATP; the sequence is GSVAVGKS.

Belongs to the prokaryotic pantothenate kinase family.

The protein resides in the cytoplasm. The enzyme catalyses (R)-pantothenate + ATP = (R)-4'-phosphopantothenate + ADP + H(+). It participates in cofactor biosynthesis; coenzyme A biosynthesis; CoA from (R)-pantothenate: step 1/5. The polypeptide is Pantothenate kinase (Mycobacterium marinum (strain ATCC BAA-535 / M)).